Consider the following 388-residue polypeptide: Flap endonuclease 1 (388 aa).

Residues 1-104 are N-domain; the sequence is MGILGLSKLI…GELAKRAERR (104 aa). A Mg(2+)-binding site is contributed by aspartate 34. The DNA site is built by arginine 47 and arginine 70. The Mg(2+) site is built by aspartate 86, glutamate 158, glutamate 160, aspartate 179, and aspartate 181. The tract at residues 122–253 is I-domain; that stretch reads QIEKFNRRLV…KRAIELIKSY (132 aa). Glutamate 158 lines the DNA pocket. 2 residues coordinate DNA: glycine 231 and aspartate 233. Residue aspartate 233 participates in Mg(2+) binding. The interval 336-344 is interaction with PCNA; that stretch reads TQVRLDSFF. The segment at 355–388 is disordered; sequence AAAKRKAEESKKSANSKKAKIGGGSGAGRGRRPK.

It belongs to the XPG/RAD2 endonuclease family. FEN1 subfamily. Interacts with PCNA. Three molecules of FEN1 bind to one PCNA trimer with each molecule binding to one PCNA monomer. PCNA stimulates the nuclease activity without altering cleavage specificity. Mg(2+) is required as a cofactor. Phosphorylated. Phosphorylation upon DNA damage induces relocalization to the nuclear plasma.

The protein localises to the nucleus. The protein resides in the nucleolus. It is found in the nucleoplasm. Its subcellular location is the mitochondrion. Functionally, structure-specific nuclease with 5'-flap endonuclease and 5'-3' exonuclease activities involved in DNA replication and repair. During DNA replication, cleaves the 5'-overhanging flap structure that is generated by displacement synthesis when DNA polymerase encounters the 5'-end of a downstream Okazaki fragment. It enters the flap from the 5'-end and then tracks to cleave the flap base, leaving a nick for ligation. Also involved in the long patch base excision repair (LP-BER) pathway, by cleaving within the apurinic/apyrimidinic (AP) site-terminated flap. Acts as a genome stabilization factor that prevents flaps from equilibrating into structures that lead to duplications and deletions. Also possesses 5'-3' exonuclease activity on nicked or gapped double-stranded DNA, and exhibits RNase H activity. Also involved in replication and repair of rDNA and in repairing mitochondrial DNA. This chain is Flap endonuclease 1, found in Drosophila grimshawi (Hawaiian fruit fly).